A 499-amino-acid polypeptide reads, in one-letter code: Maturase K (499 aa).

This sequence belongs to the intron maturase 2 family. MatK subfamily.

It localises to the plastid. The protein localises to the chloroplast. In terms of biological role, usually encoded in the trnK tRNA gene intron. Probably assists in splicing its own and other chloroplast group II introns. The sequence is that of Maturase K from Camellia sinensis (Tea plant).